A 329-amino-acid chain; its full sequence is Lipoyl synthase (329 aa).

[4Fe-4S] cluster contacts are provided by Cys55, Cys60, Cys66, Cys81, Cys85, Cys88, and Ser292. A Radical SAM core domain is found at Trp67–Leu281.

The protein belongs to the radical SAM superfamily. Lipoyl synthase family. It depends on [4Fe-4S] cluster as a cofactor.

The protein resides in the cytoplasm. The catalysed reaction is [[Fe-S] cluster scaffold protein carrying a second [4Fe-4S](2+) cluster] + N(6)-octanoyl-L-lysyl-[protein] + 2 oxidized [2Fe-2S]-[ferredoxin] + 2 S-adenosyl-L-methionine + 4 H(+) = [[Fe-S] cluster scaffold protein] + N(6)-[(R)-dihydrolipoyl]-L-lysyl-[protein] + 4 Fe(3+) + 2 hydrogen sulfide + 2 5'-deoxyadenosine + 2 L-methionine + 2 reduced [2Fe-2S]-[ferredoxin]. It functions in the pathway protein modification; protein lipoylation via endogenous pathway; protein N(6)-(lipoyl)lysine from octanoyl-[acyl-carrier-protein]: step 2/2. Functionally, catalyzes the radical-mediated insertion of two sulfur atoms into the C-6 and C-8 positions of the octanoyl moiety bound to the lipoyl domains of lipoate-dependent enzymes, thereby converting the octanoylated domains into lipoylated derivatives. The sequence is that of Lipoyl synthase from Leifsonia xyli subsp. xyli (strain CTCB07).